A 207-amino-acid chain; its full sequence is Large ribosomal subunit protein uL4 (207 aa).

A disordered region spans residues 48 to 89 (SHKVKNRSEVRGGGRKPWRQKGTGRARQGSIRSPQWRGGGVV). Over residues 60–71 (GGRKPWRQKGTG) the composition is skewed to basic residues.

This sequence belongs to the universal ribosomal protein uL4 family. As to quaternary structure, part of the 50S ribosomal subunit.

Functionally, one of the primary rRNA binding proteins, this protein initially binds near the 5'-end of the 23S rRNA. It is important during the early stages of 50S assembly. It makes multiple contacts with different domains of the 23S rRNA in the assembled 50S subunit and ribosome. Forms part of the polypeptide exit tunnel. The protein is Large ribosomal subunit protein uL4 of Bacillus velezensis (strain DSM 23117 / BGSC 10A6 / LMG 26770 / FZB42) (Bacillus amyloliquefaciens subsp. plantarum).